Reading from the N-terminus, the 345-residue chain is MGLEGSEKLEHEIEQVHDNIENRKEEVSTLQDMANDLEKLTDHIEATYIGRGVPHDHAKTGSRKPSSGQLIATMQNEIDRLKKEGDKVSILLMQERKKRKELESAKNNLLNVYDSLKMQKASVSSMVNRKQRAAKEEQKIQEEFERQITDLLEEQQQLKLEIERLEAETERANSETEQYEKQKEALEEEYEELRNECLKHDPQLDAEIRTLQDTFEEVERTLTKQVSDAKIADKPLKDSMFNSNSEKEKIMHALEKAEKDADIYSEFIQQYMEQLESSLEKSSTAIENAQNRLAEMTAHLAESSDYDNDDDTDGIINETDYELDTSQSEFATLTTSSNKSILNES.

Disordered regions lie at residues 1–24 and 296–345; these read MGLE…ENRK and MTAH…LNES. Over residues 304-323 the composition is skewed to acidic residues; that stretch reads SDYDNDDDTDGIINETDYEL. Positions 324 to 345 are enriched in polar residues; sequence DTSQSEFATLTTSSNKSILNES.

This is an uncharacterized protein from Schizosaccharomyces pombe (strain 972 / ATCC 24843) (Fission yeast).